Here is a 215-residue protein sequence, read N- to C-terminus: UPF0441 protein SG0265 (215 aa).

Belongs to the UPF0441 family.

The chain is UPF0441 protein SG0265 from Sodalis glossinidius (strain morsitans).